A 326-amino-acid polypeptide reads, in one-letter code: tRNA-modifying protein YgfZ (326 aa).

Positions 27 and 189 each coordinate folate.

This sequence belongs to the tRNA-modifying YgfZ family.

Its subcellular location is the cytoplasm. In terms of biological role, folate-binding protein involved in regulating the level of ATP-DnaA and in the modification of some tRNAs. It is probably a key factor in regulatory networks that act via tRNA modification, such as initiation of chromosomal replication. The polypeptide is tRNA-modifying protein YgfZ (Enterobacter sp. (strain 638)).